A 469-amino-acid polypeptide reads, in one-letter code: Probable Xaa-Pro aminopeptidase AN0832 (469 aa).

Residues Asp260, Asp271, Glu398, and Glu437 each coordinate Mn(2+).

The protein belongs to the peptidase M24B family. Mn(2+) is required as a cofactor.

It catalyses the reaction Release of any N-terminal amino acid, including proline, that is linked to proline, even from a dipeptide or tripeptide.. Functionally, catalyzes the removal of a penultimate prolyl residue from the N-termini of peptides. The protein is Probable Xaa-Pro aminopeptidase AN0832 of Emericella nidulans (strain FGSC A4 / ATCC 38163 / CBS 112.46 / NRRL 194 / M139) (Aspergillus nidulans).